The primary structure comprises 409 residues: Elongation factor Tu, chloroplastic (409 aa).

A tr-type G domain is found at 10 to 214 (KPHVNIGTIG…AVDAYIPTPE (205 aa)). Residues 19–26 (GHVDHGKT) are G1. 19-26 (GHVDHGKT) serves as a coordination point for GTP. Position 26 (Thr26) interacts with Mg(2+). The segment at 60–64 (GITIN) is G2. Residues 81–84 (DCPG) form a G3 region. GTP contacts are provided by residues 81–85 (DCPGH) and 136–139 (NKQD). Positions 136-139 (NKQD) are G4. A G5 region spans residues 174–176 (SAL).

Belongs to the TRAFAC class translation factor GTPase superfamily. Classic translation factor GTPase family. EF-Tu/EF-1A subfamily.

Its subcellular location is the plastid. The protein localises to the chloroplast. The enzyme catalyses GTP + H2O = GDP + phosphate + H(+). Its function is as follows. GTP hydrolase that promotes the GTP-dependent binding of aminoacyl-tRNA to the A-site of ribosomes during protein biosynthesis. The sequence is that of Elongation factor Tu, chloroplastic (tufA) from Thalassiosira pseudonana (Marine diatom).